A 270-amino-acid chain; its full sequence is uncharacterized protein (270 aa).

An NADP(+)-binding site is contributed by 30–55; the sequence is ATGSLGRVAARALADAGARLTLAGGN. Ser-157 provides a ligand contact to substrate. Catalysis depends on Tyr-171, which acts as the Proton acceptor.

This sequence belongs to the short-chain dehydrogenases/reductases (SDR) family.

This is an uncharacterized protein from Mycobacterium tuberculosis (strain CDC 1551 / Oshkosh).